The chain runs to 671 residues: K(+)-insensitive pyrophosphate-energized proton pump (671 aa).

The next 5 helical transmembrane spans lie at 4 to 24, 57 to 77, 79 to 99, 128 to 148, and 156 to 176; these read LIFT…FFAK, TIAV…DEGL, IAAG…IGMS, AVTG…LYIL, and VGFG…GGIF. Lysine 178 contributes to the substrate binding site. Mg(2+) is bound by residues aspartate 181, aspartate 185, asparagine 208, and aspartate 211. Transmembrane regions (helical) follow at residues 223 to 243, 249 to 269, 285 to 305, 310 to 330, 365 to 385, and 393 to 413; these read LFET…LIIG, VLYP…SVFF, GVGG…GFLM, FFYV…VTEY, TLVP…IVGG, and LYGI…IVAL. Residue aspartate 421 participates in Mg(2+) binding. The next 4 helical transmembrane spans lie at 452 to 472, 490 to 510, 558 to 578, and 579 to 599; these read AVTK…LFAD, VVLS…AVMM, MAMP…FLGP, and EALA…ALMM. Residues aspartate 607, aspartate 633, and aspartate 637 each coordinate Ca(2+). Residue lysine 640 participates in substrate binding. Residues 650–670 traverse the membrane as a helical segment; that stretch reads LIKVVNMVAILFSPLIIGGGF.

This sequence belongs to the H(+)-translocating pyrophosphatase (TC 3.A.10) family. K(+)-insensitive subfamily. As to quaternary structure, homodimer. Mg(2+) is required as a cofactor.

The protein resides in the cell membrane. It catalyses the reaction diphosphate + H2O + H(+)(in) = 2 phosphate + 2 H(+)(out). Its function is as follows. Proton pump that utilizes the energy of pyrophosphate hydrolysis as the driving force for proton movement across the membrane. Generates a proton motive force. This chain is K(+)-insensitive pyrophosphate-energized proton pump, found in Methanosarcina mazei (strain ATCC BAA-159 / DSM 3647 / Goe1 / Go1 / JCM 11833 / OCM 88) (Methanosarcina frisia).